Reading from the N-terminus, the 453-residue chain is Bestrophin homolog 5 (453 aa).

4 helical membrane passes run 78–98 (ELIVWICAYSLVSVIYRFALT), 113–133 (DARMGYLPLNFVLGFFCNIII), 275–295 (IPLMYPQLVNMAVHTYFFLCI), and 314–334 (LYIPFMTIIEFIFYMGWLKVA).

This sequence belongs to the anion channel-forming bestrophin (TC 1.A.46) family. Calcium-sensitive chloride channel subfamily. As to quaternary structure, forms oligomers.

The protein resides in the cell membrane. Its function is as follows. Forms chloride channels. This chain is Bestrophin homolog 5 (best-5), found in Caenorhabditis elegans.